The primary structure comprises 208 residues: Uracil phosphoribosyltransferase (208 aa).

5-phospho-alpha-D-ribose 1-diphosphate is bound by residues Arg-78, Arg-103, and 130–138; that span reads DPMLAIGGS. Uracil-binding positions include Ile-193 and 198 to 200; that span reads GDA. Asp-199 provides a ligand contact to 5-phospho-alpha-D-ribose 1-diphosphate.

This sequence belongs to the UPRTase family. The cofactor is Mg(2+).

The enzyme catalyses UMP + diphosphate = 5-phospho-alpha-D-ribose 1-diphosphate + uracil. The protein operates within pyrimidine metabolism; UMP biosynthesis via salvage pathway; UMP from uracil: step 1/1. With respect to regulation, allosterically activated by GTP. Catalyzes the conversion of uracil and 5-phospho-alpha-D-ribose 1-diphosphate (PRPP) to UMP and diphosphate. This is Uracil phosphoribosyltransferase from Vibrio cholerae serotype O1 (strain ATCC 39315 / El Tor Inaba N16961).